We begin with the raw amino-acid sequence, 338 residues long: Biotin synthase (338 aa).

Residues 59-284 form the Radical SAM core domain; the sequence is EEVEIEGIVS…RTTLRFAGGR (226 aa). Positions 74, 78, and 81 each coordinate [4Fe-4S] cluster. [2Fe-2S] cluster contacts are provided by C117, C209, and R279.

It belongs to the radical SAM superfamily. Biotin synthase family. As to quaternary structure, homodimer. [4Fe-4S] cluster serves as cofactor. It depends on [2Fe-2S] cluster as a cofactor.

The enzyme catalyses (4R,5S)-dethiobiotin + (sulfur carrier)-SH + 2 reduced [2Fe-2S]-[ferredoxin] + 2 S-adenosyl-L-methionine = (sulfur carrier)-H + biotin + 2 5'-deoxyadenosine + 2 L-methionine + 2 oxidized [2Fe-2S]-[ferredoxin]. The protein operates within cofactor biosynthesis; biotin biosynthesis; biotin from 7,8-diaminononanoate: step 2/2. Catalyzes the conversion of dethiobiotin (DTB) to biotin by the insertion of a sulfur atom into dethiobiotin via a radical-based mechanism. The protein is Biotin synthase of Corynebacterium urealyticum (strain ATCC 43042 / DSM 7109).